Here is a 781-residue protein sequence, read N- to C-terminus: 5-methyltetrahydropteroyltriglutamate--homocysteine methyltransferase (781 aa).

5-methyltetrahydropteroyltri-L-glutamate contacts are provided by residues 20–23 (RELK) and Lys131. Residues 453–455 (IGS) and Glu506 each bind L-homocysteine. Residues 453–455 (IGS) and Glu506 contribute to the L-methionine site. 5-methyltetrahydropteroyltri-L-glutamate contacts are provided by residues 537 to 538 (RC) and Trp583. Residue Asp621 participates in L-homocysteine binding. Asp621 contributes to the L-methionine binding site. Glu627 lines the 5-methyltetrahydropteroyltri-L-glutamate pocket. His663, Cys665, and Glu687 together coordinate Zn(2+). The active-site Proton donor is the His716. Cys748 serves as a coordination point for Zn(2+).

The protein belongs to the vitamin-B12 independent methionine synthase family. Zn(2+) is required as a cofactor.

The enzyme catalyses 5-methyltetrahydropteroyltri-L-glutamate + L-homocysteine = tetrahydropteroyltri-L-glutamate + L-methionine. The protein operates within amino-acid biosynthesis; L-methionine biosynthesis via de novo pathway; L-methionine from L-homocysteine (MetE route): step 1/1. Functionally, catalyzes the transfer of a methyl group from 5-methyltetrahydrofolate to homocysteine resulting in methionine formation. The sequence is that of 5-methyltetrahydropteroyltriglutamate--homocysteine methyltransferase from Bradyrhizobium diazoefficiens (strain JCM 10833 / BCRC 13528 / IAM 13628 / NBRC 14792 / USDA 110).